The chain runs to 2410 residues: Cell wall alpha-1,3-glucan synthase ags1 (2410 aa).

Ser-1643, Ser-1644, and Ser-1651 each carry phosphoserine. Thr-1653 is modified (phosphothreonine). The tract at residues 1685 to 1706 is disordered; that stretch reads SLSLGSRRGPGHTTEDDASDGL. 2 positions are modified to phosphoserine: Ser-1738 and Ser-1812. Positions 1796-1827 are disordered; that stretch reads QDDLSDPARSVDSDSVSPPLPPFVAGSNPNAR. Over residues 1802–1827 the composition is skewed to low complexity; it reads PARSVDSDSVSPPLPPFVAGSNPNAR.

Belongs to the glycosyltransferase group 1 family. As to quaternary structure, interacts with sad1.

The catalysed reaction is [(1-&gt;3)-alpha-D-glucosyl](n) + UDP-alpha-D-glucose = [(1-&gt;3)-alpha-D-glucosyl](n+1) + UDP + H(+). Functionally, required for alpha-1,3-glucan and alpha-1,4-glucan production which are required for cell wall synthesis. This chain is Cell wall alpha-1,3-glucan synthase ags1 (ags1), found in Schizosaccharomyces pombe (strain 972 / ATCC 24843) (Fission yeast).